The chain runs to 202 residues: uncharacterized protein (202 aa).

In terms of domain architecture, Smr spans 116–196 (LDLHGMTCSE…GKGTTWVLLK (81 aa)).

This is an uncharacterized protein from Treponema pallidum (strain Nichols).